A 189-amino-acid chain; its full sequence is ATP synthase subunit b (189 aa).

A helical transmembrane segment spans residues 35 to 54 (LLAQMFNFLVLLILLRAVAY).

Belongs to the ATPase B chain family. In terms of assembly, F-type ATPases have 2 components, F(1) - the catalytic core - and F(0) - the membrane proton channel. F(1) has five subunits: alpha(3), beta(3), gamma(1), delta(1), epsilon(1). F(0) has three main subunits: a(1), b(2) and c(10-14). The alpha and beta chains form an alternating ring which encloses part of the gamma chain. F(1) is attached to F(0) by a central stalk formed by the gamma and epsilon chains, while a peripheral stalk is formed by the delta and b chains.

It is found in the cell membrane. In terms of biological role, f(1)F(0) ATP synthase produces ATP from ADP in the presence of a proton or sodium gradient. F-type ATPases consist of two structural domains, F(1) containing the extramembraneous catalytic core and F(0) containing the membrane proton channel, linked together by a central stalk and a peripheral stalk. During catalysis, ATP synthesis in the catalytic domain of F(1) is coupled via a rotary mechanism of the central stalk subunits to proton translocation. Its function is as follows. Component of the F(0) channel, it forms part of the peripheral stalk, linking F(1) to F(0). In Desulforamulus reducens (strain ATCC BAA-1160 / DSM 100696 / MI-1) (Desulfotomaculum reducens), this protein is ATP synthase subunit b.